Consider the following 66-residue polypeptide: Disintegrin EO5B (66 aa).

A Disintegrin domain is found at 1–65 (NSAHPCCDPV…DCPRNPYKGK (65 aa)). Intrachain disulfides connect Cys6–Cys29, Cys20–Cys26, Cys25–Cys50, and Cys38–Cys57. Residues 42-44 (VGD) carry the Cell attachment site; atypical (VGD) motif.

The protein belongs to the disintegrin family. Dimeric disintegrin subfamily. In terms of assembly, heterodimer with EO4A or EO5A; disulfide-linked. Expressed by the venom gland.

The protein resides in the secreted. Functionally, poor inhibitor of platelet aggregation. When it dimerizes with EO4A, it inhibits the adhesion of cells expressing the RGD-dependent integrin alpha-5/beta-1 (ITGA5/ITGB1) to immobilized fibronectin. When it dimerizes with EO5A, it inhibits the adhesion of the alpha-4/beta-1 (ITGA4/ITGB1) integrin to VCAM-1. When it dimerizes either with EO4A or EO5A, the inhibition on alpha-IIb/beta-3 (ITGA2B/ITGB3) is low. The sequence is that of Disintegrin EO5B from Echis ocellatus (Ocellated saw-scaled viper).